A 235-amino-acid polypeptide reads, in one-letter code: uncharacterized protein (235 aa).

This is an uncharacterized protein from Escherichia coli (strain K12).